Reading from the N-terminus, the 208-residue chain is Small ribosomal subunit protein eS8 (208 aa).

Residues 1 to 27 (MGISRDNWHKRRKTGGKRKPYHKKRKY) form a disordered region. G2 is lipidated: N-myristoyl glycine. The span at 8–26 (WHKRRKTGGKRKPYHKKRK) shows a compositional bias: basic residues. K37 and K128 each carry N6-acetyllysine. A Phosphothreonine modification is found at T130. Phosphoserine is present on S160. Glycyl lysine isopeptide (Lys-Gly) (interchain with G-Cter in SUMO2) cross-links involve residues K170 and K193.

This sequence belongs to the eukaryotic ribosomal protein eS8 family. As to quaternary structure, component of the small ribosomal subunit. Identified in a IGF2BP1-dependent mRNP granule complex containing untranslated mRNAs. Part of the small subunit (SSU) processome, composed of more than 70 proteins and the RNA chaperone small nucleolar RNA (snoRNA) U3.

The protein localises to the cytoplasm. Its subcellular location is the membrane. It is found in the nucleus. It localises to the nucleolus. Component of the small ribosomal subunit. The ribosome is a large ribonucleoprotein complex responsible for the synthesis of proteins in the cell. Part of the small subunit (SSU) processome, first precursor of the small eukaryotic ribosomal subunit. During the assembly of the SSU processome in the nucleolus, many ribosome biogenesis factors, an RNA chaperone and ribosomal proteins associate with the nascent pre-rRNA and work in concert to generate RNA folding, modifications, rearrangements and cleavage as well as targeted degradation of pre-ribosomal RNA by the RNA exosome. This Mus musculus (Mouse) protein is Small ribosomal subunit protein eS8 (Rps8).